The primary structure comprises 615 residues: Dihydroxy-acid dehydratase (615 aa).

Asp81 contributes to the Mg(2+) binding site. [2Fe-2S] cluster is bound at residue Cys122. Positions 123 and 124 each coordinate Mg(2+). At Lys124 the chain carries N6-carboxylysine. Cys197 provides a ligand contact to [2Fe-2S] cluster. Glu494 contributes to the Mg(2+) binding site. The active-site Proton acceptor is the Ser520.

This sequence belongs to the IlvD/Edd family. In terms of assembly, homodimer. Requires [2Fe-2S] cluster as cofactor. Mg(2+) serves as cofactor.

It carries out the reaction (2R)-2,3-dihydroxy-3-methylbutanoate = 3-methyl-2-oxobutanoate + H2O. It catalyses the reaction (2R,3R)-2,3-dihydroxy-3-methylpentanoate = (S)-3-methyl-2-oxopentanoate + H2O. It participates in amino-acid biosynthesis; L-isoleucine biosynthesis; L-isoleucine from 2-oxobutanoate: step 3/4. It functions in the pathway amino-acid biosynthesis; L-valine biosynthesis; L-valine from pyruvate: step 3/4. Its function is as follows. Functions in the biosynthesis of branched-chain amino acids. Catalyzes the dehydration of (2R,3R)-2,3-dihydroxy-3-methylpentanoate (2,3-dihydroxy-3-methylvalerate) into 2-oxo-3-methylpentanoate (2-oxo-3-methylvalerate) and of (2R)-2,3-dihydroxy-3-methylbutanoate (2,3-dihydroxyisovalerate) into 2-oxo-3-methylbutanoate (2-oxoisovalerate), the penultimate precursor to L-isoleucine and L-valine, respectively. This chain is Dihydroxy-acid dehydratase, found in Salinispora arenicola (strain CNS-205).